The following is a 323-amino-acid chain: Ig gamma chain C region (323 aa).

Ig-like domains lie at 6–96, 114–213, and 222–318; these read PSVF…KTVA, PSVF…KTIS, and PKVY…KSIS.

In Oryctolagus cuniculus (Rabbit), this protein is Ig gamma chain C region.